A 163-amino-acid chain; its full sequence is Photosystem II extrinsic protein V (163 aa).

The signal sequence occupies residues 1–26 (MFRRLIGVVVATVLLTFQLIVGSATA). Heme c contacts are provided by Cys-63, Cys-66, His-67, and His-118.

Belongs to the cytochrome c family. PsbV subfamily. In terms of assembly, PSII is composed of 1 copy each of membrane proteins PsbA, PsbB, PsbC, PsbD, PsbE, PsbF, PsbH, PsbI, PsbJ, PsbK, PsbL, PsbM, PsbT, PsbX, PsbY, PsbZ, Psb30/Ycf12, peripheral proteins PsbO, CyanoQ (PsbQ), PsbU, PsbV and a large number of cofactors. It forms dimeric complexes. It depends on heme c as a cofactor.

It localises to the cellular thylakoid membrane. In terms of biological role, one of the extrinsic, lumenal subunits of photosystem II (PSII). PSII is a light-driven water plastoquinone oxidoreductase, using light energy to abstract electrons from H(2)O, generating a proton gradient subsequently used for ATP formation. The extrinsic proteins stabilize the structure of photosystem II oxygen-evolving complex (OEC), the ion environment of oxygen evolution and protect the OEC against heat-induced inactivation. Low-potential cytochrome c that plays a role in the OEC of PSII. In Trichormus variabilis (strain ATCC 29413 / PCC 7937) (Anabaena variabilis), this protein is Photosystem II extrinsic protein V.